A 750-amino-acid polypeptide reads, in one-letter code: NAD(P)H-quinone oxidoreductase subunit 5, chloroplastic (750 aa).

16 helical membrane passes run 9-29, 40-60, 89-109, 125-145, 147-167, 185-205, 230-250, 258-278, 283-303, 327-347, 354-374, 396-416, 425-445, 548-568, 607-627, and 724-744; these read WIIPFLPLPVPMLIGVGLLLF, WAFTSILLLSIVMIFATNLSI, IDPLTSIMSMLITTVGIMVLI, FAYMSFFSTSMFGLVTSSNLI, IYIFWELVGMCSYLLIGFWFT, GDFGLLLGILGFYWITGSFEF, AALLFAGAVAKSAQFPLHIWL, TPISALIHAATMVAAGIFLVA, LFIVIPYILNIISLIGLITVL, LGYMILALGIGSYRSALFHLI, ALLFLGSGSVIHSMETIVGYS, TSFLLGTLSLSGIPPLACFWS, WLYSPIFAIIAWATAGLTAFY, LFPLLVLVLFTLFVGSIGIPF, IFSVSIAYFGIFLASFLYKPI, and LFFYFCCVSIFLVIYYKFYLF.

This sequence belongs to the complex I subunit 5 family. As to quaternary structure, NDH is composed of at least 16 different subunits, 5 of which are encoded in the nucleus.

The protein localises to the plastid. Its subcellular location is the chloroplast thylakoid membrane. It carries out the reaction a plastoquinone + NADH + (n+1) H(+)(in) = a plastoquinol + NAD(+) + n H(+)(out). The catalysed reaction is a plastoquinone + NADPH + (n+1) H(+)(in) = a plastoquinol + NADP(+) + n H(+)(out). Its function is as follows. NDH shuttles electrons from NAD(P)H:plastoquinone, via FMN and iron-sulfur (Fe-S) centers, to quinones in the photosynthetic chain and possibly in a chloroplast respiratory chain. The immediate electron acceptor for the enzyme in this species is believed to be plastoquinone. Couples the redox reaction to proton translocation, and thus conserves the redox energy in a proton gradient. The polypeptide is NAD(P)H-quinone oxidoreductase subunit 5, chloroplastic (ndhF) (Tecoma stans (Yellow bells)).